Here is a 318-residue protein sequence, read N- to C-terminus: Transaldolase (318 aa).

The active-site Schiff-base intermediate with substrate is Lys132.

The protein belongs to the transaldolase family. Type 1 subfamily. Homodimer.

Its subcellular location is the cytoplasm. The enzyme catalyses D-sedoheptulose 7-phosphate + D-glyceraldehyde 3-phosphate = D-erythrose 4-phosphate + beta-D-fructose 6-phosphate. It participates in carbohydrate degradation; pentose phosphate pathway; D-glyceraldehyde 3-phosphate and beta-D-fructose 6-phosphate from D-ribose 5-phosphate and D-xylulose 5-phosphate (non-oxidative stage): step 2/3. Transaldolase is important for the balance of metabolites in the pentose-phosphate pathway. This chain is Transaldolase, found in Shewanella oneidensis (strain ATCC 700550 / JCM 31522 / CIP 106686 / LMG 19005 / NCIMB 14063 / MR-1).